The chain runs to 861 residues: Probable beta-glucosidase A (861 aa).

The N-terminal stretch at 1-19 is a signal peptide; the sequence is MKLSILEAAALTAASVVSA. Asn62, Asn212, and Asn253 each carry an N-linked (GlcNAc...) asparagine glycan. The active site involves Asp281. N-linked (GlcNAc...) asparagine glycosylation is found at Asn316, Asn323, Asn355, Asn524, Asn543, Asn565, Asn669, and Asn713. The disordered stretch occupies residues 735 to 754; that stretch reads PEGATDGSPQPRLPASGGPG.

It belongs to the glycosyl hydrolase 3 family.

Its subcellular location is the secreted. It catalyses the reaction Hydrolysis of terminal, non-reducing beta-D-glucosyl residues with release of beta-D-glucose.. Its pathway is glycan metabolism; cellulose degradation. Beta-glucosidases are one of a number of cellulolytic enzymes involved in the degradation of cellulosic biomass. Catalyzes the last step releasing glucose from the inhibitory cellobiose. The chain is Probable beta-glucosidase A (bglA) from Aspergillus terreus (strain NIH 2624 / FGSC A1156).